The following is a 137-amino-acid chain: Small ribosomal subunit protein uS9 (137 aa).

The interval 105–137 (LKAEGYLTRDPRAKERKKYGLHKARKAPQYSKR) is disordered. Over residues 118-137 (KERKKYGLHKARKAPQYSKR) the composition is skewed to basic residues.

The protein belongs to the universal ribosomal protein uS9 family.

This is Small ribosomal subunit protein uS9 (rpsI) from Synechocystis sp. (strain ATCC 27184 / PCC 6803 / Kazusa).